The primary structure comprises 290 residues: Proteasome assembly chaperone 1 (290 aa).

The interval 1-39 (MAATFFGEVVKAPCRAGTEDEEEEEEEEGRRETPEDREV) is disordered. Ala-2 is subject to N-acetylalanine. Thr-18 carries the post-translational modification Phosphothreonine. Over residues 28 to 39 (EGRRETPEDREV) the composition is skewed to basic and acidic residues. A Phosphothreonine modification is found at Thr-56. Ser-182 carries the post-translational modification Phosphoserine. Lys-266 is subject to N6-acetyllysine.

Belongs to the PSMG1 family. In terms of assembly, forms a heterodimer with PSMG2. The PSMG1-PSMG2 heterodimer interacts directly with the PSMA5 and PSMA7 proteasome alpha subunits. In terms of processing, degraded by the proteasome upon completion of 20S proteasome maturation.

The protein localises to the cytoplasm. It localises to the endoplasmic reticulum. Chaperone protein which promotes assembly of the 20S proteasome as part of a heterodimer with PSMG2. The PSMG1-PSMG2 heterodimer binds to the PSMA5 and PSMA7 proteasome subunits, promotes assembly of the proteasome alpha subunits into the heteroheptameric alpha ring and prevents alpha ring dimerization. The polypeptide is Proteasome assembly chaperone 1 (PSMG1) (Papio anubis (Olive baboon)).